We begin with the raw amino-acid sequence, 302 residues long: MDQIRLTHLRQLEAESIHIIREVAAEFSNPVMLYSIGKDSSVMLHLARKAFYPGTLPFPLLHVDTGWKFREMYEFRDRTAKAYGCELLVHQNPEGVAMGINPFVHGSAKHTDIMKTEGLKQALNKYGFDAAFGGARRDEEKSRAKERIYSFRDRFHRWDPKNQRPELWHNYNGQINKGESIRVFPLSNWTEQDIWQYIWLENIDIVPLYLAAERPVLERDGMLMMIDDNRIDLQPGEVIKKRMVRFRTLGCWPLTGAVESNAQTLPEIIEEMLVSTTSERQGRVIDRDQAGSMELKKRQGYF.

Belongs to the PAPS reductase family. CysD subfamily. In terms of assembly, heterodimer composed of CysD, the smaller subunit, and CysN.

The catalysed reaction is sulfate + ATP + H(+) = adenosine 5'-phosphosulfate + diphosphate. Its pathway is sulfur metabolism; hydrogen sulfide biosynthesis; sulfite from sulfate: step 1/3. Its function is as follows. With CysN forms the ATP sulfurylase (ATPS) that catalyzes the adenylation of sulfate producing adenosine 5'-phosphosulfate (APS) and diphosphate, the first enzymatic step in sulfur assimilation pathway. APS synthesis involves the formation of a high-energy phosphoric-sulfuric acid anhydride bond driven by GTP hydrolysis by CysN coupled to ATP hydrolysis by CysD. In Escherichia coli O157:H7 (strain EC4115 / EHEC), this protein is Sulfate adenylyltransferase subunit 2.